The following is a 260-amino-acid chain: UPF0246 protein Bcenmc03_2247 (260 aa).

It belongs to the UPF0246 family.

The protein is UPF0246 protein Bcenmc03_2247 of Burkholderia orbicola (strain MC0-3).